The chain runs to 249 residues: MMEVRINKFLSEAGVASRRKAEKLILEGRVKVNGEVVRSLGVKVNPEVDIVEVDGKPVKPQRKRYIILNKPCCYLTQLGRSPDGRKTIEELIKDIPERVFPVGRLDYNTEGLLILTNDGELANRILHPRYKLPKVYLALVEGKVDQKTLKRMKQGIELEDGFAKPDNIRIVRYEGKNTLLEITFHEGRKHLVKRFLGAFGHKVKRLKRIAIGPIKLGKLSPGKWRELNQGELAQLFKAVGLKYVPRKRR.

The 68-residue stretch at 4–71 (VRINKFLSEA…RKRYIILNKP (68 aa)) folds into the S4 RNA-binding domain. Residue D106 is the Nucleophile of the active site.

Belongs to the pseudouridine synthase RsuA family.

It carries out the reaction a uridine in RNA = a pseudouridine in RNA. This is an uncharacterized protein from Aquifex aeolicus (strain VF5).